Here is a 216-residue protein sequence, read N- to C-terminus: Elongation factor Ts (216 aa).

The interval 81-84 (TDFV) is involved in Mg(2+) ion dislocation from EF-Tu.

It belongs to the EF-Ts family.

The protein resides in the cytoplasm. Its function is as follows. Associates with the EF-Tu.GDP complex and induces the exchange of GDP to GTP. It remains bound to the aminoacyl-tRNA.EF-Tu.GTP complex up to the GTP hydrolysis stage on the ribosome. The chain is Elongation factor Ts from Geobacter sp. (strain M21).